We begin with the raw amino-acid sequence, 159 residues long: Ribosomal RNA large subunit methyltransferase H (159 aa).

Residues leucine 76, glycine 108, and 127–132 contribute to the S-adenosyl-L-methionine site; that span reads FGLLTL.

The protein belongs to the RNA methyltransferase RlmH family. As to quaternary structure, homodimer.

It is found in the cytoplasm. It carries out the reaction pseudouridine(1915) in 23S rRNA + S-adenosyl-L-methionine = N(3)-methylpseudouridine(1915) in 23S rRNA + S-adenosyl-L-homocysteine + H(+). Its function is as follows. Specifically methylates the pseudouridine at position 1915 (m3Psi1915) in 23S rRNA. This chain is Ribosomal RNA large subunit methyltransferase H, found in Streptococcus pyogenes serotype M6 (strain ATCC BAA-946 / MGAS10394).